The primary structure comprises 234 residues: Pepsin inhibitor Dit33 (234 aa).

Positions 1-17 are cleaved as a signal peptide; the sequence is MKILFCFVLLAIAALRA. An intrachain disulfide couples Cys135 to Cys230. The disordered stretch occupies residues 200–222; sequence RHETSSQPSDATTISTTTQAPVE. The span at 204–219 shows a compositional bias: polar residues; the sequence is SSQPSDATTISTTTQA.

This sequence belongs to the protease inhibitor I33 family.

The protein resides in the secreted. In terms of biological role, aspartyl protease inhibitor. The polypeptide is Pepsin inhibitor Dit33 (DIT33) (Dirofilaria immitis (Canine heartworm)).